A 623-amino-acid polypeptide reads, in one-letter code: MPHSDELDAGNVLAVENLNIAFMQDQQKIAAVRNLSFSLQRGETLAIVGESGSGKSVTALALMRLLEQAGGLVQCDKMLLQRRSREVIELSEQSAAQMRHVRGADMAMIFQEPMTSLNPVFTVGEQIAESIRLHQNASREEAMVEAKRMLDQVRIPEAQTILSRYPHQLSGGMRQRVMIAMALSCRPAVLIADEPTTALDVTIQAQILQLIKVLQKEMSMGVIFITHDMGVVAEIADRVLVMYQGEAVETGTVEQIFHAPQHPYTRALLAAVPQLGAMKGLDYPRRFPLISLEHPAKQAPPIEQKTVVDGEPVLRVRNLVTRFPLRSGLLNRVTREVHAVEKVSFDLWPGETLSLVGESGSGKSTTGRALLRLVESQGGEIIFNGQRIDTLSPGKLQALRRDIQFIFQDPYASLDPRQTIGDSIIEPLRVHGLLPGKDAAARVAWLLERVGLLPEHAWRYPHEFSGGQRQRICIARALALNPKVIIADEAVSALDVSIRGQIINLLLDLQRDFGIAYLFISHDMAVVERISHRVAVMYLGQIVEIGPRRAVFENPQHPYTRKLLAAVPVAEPSRQRPQRVLLSDDLPSNIHLRGEEVAAVSLQCVGPGHYVAQPQSEYAFMRR.

2 consecutive ABC transporter domains span residues 15–269 (VENL…RALL) and 314–564 (LRVR…RKLL). ATP-binding positions include 49 to 56 (GESGSGKS) and 357 to 364 (GESGSGKS).

Belongs to the ABC transporter superfamily. Glutathione importer (TC 3.A.1.5.11) family. In terms of assembly, the complex is composed of two ATP-binding proteins (GsiA), two transmembrane proteins (GsiC and GsiD) and a solute-binding protein (GsiB).

The protein localises to the cell inner membrane. It carries out the reaction glutathione(out) + ATP + H2O = glutathione(in) + ADP + phosphate + H(+). Part of the ABC transporter complex GsiABCD involved in glutathione import. Responsible for energy coupling to the transport system. This Shigella sonnei (strain Ss046) protein is Glutathione import ATP-binding protein GsiA.